Reading from the N-terminus, the 333-residue chain is Ribokinase (333 aa).

Residues 10 to 12 (NYD), 38 to 42 (GKGLN), and glutamate 149 each bind substrate. ATP-binding positions include asparagine 193 and 248–253 (TLGSRG). Residues aspartate 277 and threonine 279 each contribute to the K(+) site. 282 to 283 (GD) contacts ATP. Aspartate 283 is a binding site for substrate. The active-site Proton acceptor is the aspartate 283. K(+) is bound by residues threonine 313, arginine 316, glycine 318, and serine 322.

Belongs to the carbohydrate kinase PfkB family. Ribokinase subfamily. In terms of assembly, homodimer. It depends on Mg(2+) as a cofactor.

It is found in the cytoplasm. The protein resides in the nucleus. It catalyses the reaction D-ribose + ATP = D-ribose 5-phosphate + ADP + H(+). The protein operates within carbohydrate metabolism; D-ribose degradation; D-ribose 5-phosphate from beta-D-ribopyranose: step 2/2. With respect to regulation, activated by a monovalent cation that binds near, but not in, the active site. The most likely occupant of the site in vivo is potassium. Ion binding induces a conformational change that may alter substrate affinity. Catalyzes the phosphorylation of ribose at O-5 in a reaction requiring ATP and magnesium. The resulting D-ribose-5-phosphate can then be used either for sythesis of nucleotides, histidine, and tryptophan, or as a component of the pentose phosphate pathway. This Saccharomyces cerevisiae (strain ATCC 204508 / S288c) (Baker's yeast) protein is Ribokinase.